The following is a 354-amino-acid chain: Uroporphyrinogen decarboxylase (354 aa).

Substrate contacts are provided by residues 27-31 (RQAGR), aspartate 77, tyrosine 154, threonine 209, and histidine 327.

Belongs to the uroporphyrinogen decarboxylase family. Homodimer.

The protein resides in the cytoplasm. It catalyses the reaction uroporphyrinogen III + 4 H(+) = coproporphyrinogen III + 4 CO2. It participates in porphyrin-containing compound metabolism; protoporphyrin-IX biosynthesis; coproporphyrinogen-III from 5-aminolevulinate: step 4/4. In terms of biological role, catalyzes the decarboxylation of four acetate groups of uroporphyrinogen-III to yield coproporphyrinogen-III. The sequence is that of Uroporphyrinogen decarboxylase from Sodalis glossinidius (strain morsitans).